Consider the following 528-residue polypeptide: Chromosomal replication initiator protein DnaA (528 aa).

The tract at residues 1-104 (MNDDPNALAR…PVDDEPESDP (104 aa)) is domain I, interacts with DnaA modulators. The disordered stretch occupies residues 95–158 (PVDDEPESDP…TDFEEVDDDR (64 aa)). A compositionally biased stretch (basic and acidic residues) spans 104-123 (PPSRDHRPEPEPLHTPRHLE). Positions 105 to 187 (PSRDHRPEPE…GPAPSATGGN (83 aa)) are domain II. Residues 149-158 (TDFEEVDDDR) show a composition bias toward acidic residues. A domain III, AAA+ region region spans residues 188-404 (SLNAKYTFDT…GALIRVTAFA (217 aa)). Gly232, Gly234, Lys235, and Thr236 together coordinate ATP. Residues 405 to 528 (SLNRQPLDLT…TARIKQRSKR (124 aa)) form a domain IV, binds dsDNA region.

Belongs to the DnaA family. In terms of assembly, oligomerizes as a right-handed, spiral filament on DNA at oriC.

The protein resides in the cytoplasm. Functionally, plays an essential role in the initiation and regulation of chromosomal replication. ATP-DnaA binds to the origin of replication (oriC) to initiate formation of the DNA replication initiation complex once per cell cycle. Binds the DnaA box (a 9 base pair repeat at the origin) and separates the double-stranded (ds)DNA. Forms a right-handed helical filament on oriC DNA; dsDNA binds to the exterior of the filament while single-stranded (ss)DNA is stabiized in the filament's interior. The ATP-DnaA-oriC complex binds and stabilizes one strand of the AT-rich DNA unwinding element (DUE), permitting loading of DNA polymerase. After initiation quickly degrades to an ADP-DnaA complex that is not apt for DNA replication. Binds acidic phospholipids. This is Chromosomal replication initiator protein DnaA from Rhodococcus jostii (strain RHA1).